We begin with the raw amino-acid sequence, 514 residues long: Ribonuclease Y (514 aa).

The chain crosses the membrane as a helical span at residues tyrosine 3–phenylalanine 23. In terms of domain architecture, KH spans threonine 204–leucine 289. The HD domain maps to valine 330 to alanine 423.

Belongs to the RNase Y family.

The protein localises to the cell membrane. In terms of biological role, endoribonuclease that initiates mRNA decay. The chain is Ribonuclease Y from Clostridium kluyveri (strain ATCC 8527 / DSM 555 / NBRC 12016 / NCIMB 10680 / K1).